Here is a 208-residue protein sequence, read N- to C-terminus: Ribosomal RNA small subunit methyltransferase G (208 aa).

S-adenosyl-L-methionine contacts are provided by residues Gly-77, Leu-82, 128–129 (VE), and Arg-142.

The protein belongs to the methyltransferase superfamily. RNA methyltransferase RsmG family.

It localises to the cytoplasm. It carries out the reaction guanosine(527) in 16S rRNA + S-adenosyl-L-methionine = N(7)-methylguanosine(527) in 16S rRNA + S-adenosyl-L-homocysteine. In terms of biological role, specifically methylates the N7 position of guanine in position 527 of 16S rRNA. The chain is Ribosomal RNA small subunit methyltransferase G from Chromohalobacter salexigens (strain ATCC BAA-138 / DSM 3043 / CIP 106854 / NCIMB 13768 / 1H11).